The following is a 241-amino-acid chain: Ribonuclease PH (241 aa).

Phosphate contacts are provided by residues Arg87 and Gly125–Arg127.

The protein belongs to the RNase PH family. In terms of assembly, homohexameric ring arranged as a trimer of dimers.

The catalysed reaction is tRNA(n+1) + phosphate = tRNA(n) + a ribonucleoside 5'-diphosphate. Functionally, phosphorolytic 3'-5' exoribonuclease that plays an important role in tRNA 3'-end maturation. Removes nucleotide residues following the 3'-CCA terminus of tRNAs; can also add nucleotides to the ends of RNA molecules by using nucleoside diphosphates as substrates, but this may not be physiologically important. Probably plays a role in initiation of 16S rRNA degradation (leading to ribosome degradation) during starvation. This Salinispora arenicola (strain CNS-205) protein is Ribonuclease PH.